Here is a 132-residue protein sequence, read N- to C-terminus: Fatty acid-binding protein, brain (132 aa).

The residue at position 2 (valine 2) is an N-acetylvaline. Position 127-129 (127-129) interacts with a fatty acid; it reads RHY.

This sequence belongs to the calycin superfamily. Fatty-acid binding protein (FABP) family. Expressed in brain and other neural tissues.

The protein localises to the cytoplasm. In terms of biological role, B-FABP could be involved in the transport of a so far unknown hydrophobic ligand with potential morphogenic activity during CNS development. It is required for the establishment of the radial glial fiber system in developing brain, a system that is necessary for the migration of immature neurons to establish cortical layers. This chain is Fatty acid-binding protein, brain (FABP7), found in Homo sapiens (Human).